Here is a 1023-residue protein sequence, read N- to C-terminus: Sodium/potassium-transporting ATPase subunit alpha-1 (1023 aa).

A propeptide spanning residues 1–5 is cleaved from the precursor; sequence MGKGV. Positions 1-11 are enriched in basic and acidic residues; that stretch reads MGKGVGRDKYE. A disordered region spans residues 1-38; the sequence is MGKGVGRDKYEPAAVSEHGDKKGKKAKKERDMDELKKE. Over 6–87 the chain is Cytoplasmic; that stretch reads GRDKYEPAAV…NALTPPPTTP (82 aa). Lys9 bears the N6-acetyllysine mark. Tyr10 is modified (phosphotyrosine). The residue at position 16 (Ser16) is a Phosphoserine; by PKC. An N6-acetyllysine modification is found at Lys21. Residues 28 to 38 show a composition bias toward basic and acidic residues; the sequence is KERDMDELKKE. Ser40 and Ser47 each carry phosphoserine. The segment at 82–84 is phosphoinositide-3 kinase binding; the sequence is PPP. Residues 88–108 form a helical membrane-spanning segment; it reads EWVKFCRQLFGGFSMLLWIGA. Residues 109–131 are Extracellular-facing; that stretch reads ILCFLAYGILAATEEDFDNDNLY. Residues 132–152 traverse the membrane as a helical segment; the sequence is LGVVLAAVVIITGCFSYYQEA. Residues 153–288 lie on the Cytoplasmic side of the membrane; the sequence is KSSKIMESFK…GGQTPIAAEI (136 aa). The disordered stretch occupies residues 216-235; it reads SSLTGESEPQTRSPDFTNEN. Ser228 is subject to Phosphoserine. Tyr260 bears the Phosphotyrosine mark. Residues 289 to 308 form a helical membrane-spanning segment; the sequence is EHFIHIITGVAVFLGVSFFI. Residues 309-320 lie on the Extracellular side of the membrane; that stretch reads LSLILEYTWLEA. Residues 321-338 form a helical membrane-spanning segment; the sequence is VIFLIGIIVANVPEGLLA. The Cytoplasmic segment spans residues 339-772; it reads TVTVCLTLTA…EEGRLIFDNL (434 aa). The active-site 4-aspartylphosphate intermediate is the Asp376. Ser452 and Ser484 each carry phosphoserine. Lys487 lines the ATP pocket. Tyr542 is modified (phosphotyrosine). Residues 596–717 form a mediates interaction with SCN7A region; it reads RAAVPDAVGK…QGAIVAVTGD (122 aa). Lys661 carries the N6-succinyllysine modification. Ser668 and Ser675 each carry phosphoserine. The Mg(2+) site is built by Asp717 and Asp721. A helical transmembrane segment spans residues 773–792; sequence KKSIAYTLTSNIPEITPFLI. Residues 793 to 802 are Extracellular-facing; it reads FIIANIPLPL. A helical membrane pass occupies residues 803 to 823; the sequence is GTVTILCIDLGTDMVPAISLA. Topologically, residues 824 to 843 are cytoplasmic; it reads YEQAESDIMKRQPRNPKTDK. Residues 844–866 traverse the membrane as a helical segment; it reads LVNERLISMAYGQIGMIQALGGF. Topologically, residues 867–918 are extracellular; it reads FTYFVILAENGFLPFHLLGIRVDWDDRWINDVEDSYGQQWTYEQRKIVEFTC. The chain crosses the membrane as a helical span at residues 919–938; sequence HTAFFVSIVVVQWADLVICK. At 939–951 the chain is on the cytoplasmic side; it reads TRRNSVFQQGMKN. The residue at position 943 (Ser943) is a Phosphoserine; by PKA. Residues 952-970 form a helical membrane-spanning segment; sequence KILIFGLFEETALAAFLSY. Over 971-985 the chain is Extracellular; it reads CPGMGVALRMYPLKP. Residues 986–1006 traverse the membrane as a helical segment; sequence TWWFCAFPYSLLIFVYDEIRK. At 1007–1023 the chain is on the cytoplasmic side; sequence LIIRRRPGGWVEKETYY.

Belongs to the cation transport ATPase (P-type) (TC 3.A.3) family. Type IIC subfamily. The sodium/potassium-transporting ATPase is composed of a catalytic alpha subunit, an auxiliary non-catalytic beta subunit and an additional regulatory subunit. Interacts with regulatory subunit FXYD1. Interacts with regulatory subunit FXYD3. Interacts with SIK1. Interacts with SLC35G1 and STIM1. Interacts with CLN3; this interaction regulates the sodium/potassium-transporting ATPase complex localization at the plasma membrane. Interacts with SCN7A; activates ATP1A1 P-type sodium:potassium-exchanging transporter activity which indirectly signals to nearby neurons to regulate sodium homeostasis. Phosphorylation on Tyr-10 modulates pumping activity. Phosphorylation of Ser-943 by PKA modulates the response of ATP1A1 to PKC. Dephosphorylation by protein phosphatase 2A (PP2A) following increases in intracellular sodium, leading to increase catalytic activity. As to expression, expressed in endocardial endothelial cells.

The protein localises to the cell membrane. It is found in the basolateral cell membrane. The protein resides in the sarcolemma. Its subcellular location is the cell projection. It localises to the axon. The protein localises to the melanosome. The enzyme catalyses K(+)(out) + Na(+)(in) + ATP + H2O = K(+)(in) + Na(+)(out) + ADP + phosphate + H(+). This is the catalytic component of the active enzyme, which catalyzes the hydrolysis of ATP coupled with the exchange of sodium and potassium ions across the plasma membrane. This action creates the electrochemical gradient of sodium and potassium ions, providing the energy for active transport of various nutrients. Could also be part of an osmosensory signaling pathway that senses body-fluid sodium levels and controls salt intake behavior as well as voluntary water intake to regulate sodium homeostasis. In Oryctolagus cuniculus (Rabbit), this protein is Sodium/potassium-transporting ATPase subunit alpha-1 (ATP1A1).